Consider the following 490-residue polypeptide: 53 kDa membrane antigen A (490 aa).

The signal sequence occupies residues 1–16 (MKKKLFFALLVLILSS). Cys17 carries the N-palmitoyl cysteine lipid modification. The S-diacylglycerol cysteine moiety is linked to residue Cys17.

Its subcellular location is the cell membrane. This is 53 kDa membrane antigen A (tdpA) from Treponema denticola.